A 197-amino-acid polypeptide reads, in one-letter code: Imidazoleglycerol-phosphate dehydratase (197 aa).

Belongs to the imidazoleglycerol-phosphate dehydratase family.

It is found in the cytoplasm. It catalyses the reaction D-erythro-1-(imidazol-4-yl)glycerol 3-phosphate = 3-(imidazol-4-yl)-2-oxopropyl phosphate + H2O. It functions in the pathway amino-acid biosynthesis; L-histidine biosynthesis; L-histidine from 5-phospho-alpha-D-ribose 1-diphosphate: step 6/9. The protein is Imidazoleglycerol-phosphate dehydratase of Marinobacter nauticus (strain ATCC 700491 / DSM 11845 / VT8) (Marinobacter aquaeolei).